Consider the following 486-residue polypeptide: Glutamate--tRNA ligase (486 aa).

The short motif at 11–21 (PSPTGVVHIGN) is the 'HIGH' region element. The 'KMSKS' region motif lies at 255–259 (KLSKR). Lysine 258 contributes to the ATP binding site.

Belongs to the class-I aminoacyl-tRNA synthetase family. Glutamate--tRNA ligase type 1 subfamily. In terms of assembly, monomer.

It is found in the cytoplasm. The catalysed reaction is tRNA(Glu) + L-glutamate + ATP = L-glutamyl-tRNA(Glu) + AMP + diphosphate. Functionally, catalyzes the attachment of glutamate to tRNA(Glu) in a two-step reaction: glutamate is first activated by ATP to form Glu-AMP and then transferred to the acceptor end of tRNA(Glu). This is Glutamate--tRNA ligase from Streptococcus pneumoniae (strain CGSP14).